Here is a 52-residue protein sequence, read N- to C-terminus: uncharacterized protein (52 aa).

Residues 1–52 are disordered; the sequence is MSLRPCLTPSSMQYSDIYIPTPTPTHHTHTPTPHPHPHTHTHTHHNPNPTLF. Residues 35-45 show a composition bias toward basic residues; the sequence is PHPHTHTHTHH.

This is an uncharacterized protein from Saccharomyces cerevisiae (strain ATCC 204508 / S288c) (Baker's yeast).